We begin with the raw amino-acid sequence, 65 residues long: Large ribosomal subunit protein uL30 (65 aa).

Belongs to the universal ribosomal protein uL30 family. Part of the 50S ribosomal subunit.

The protein is Large ribosomal subunit protein uL30 of Mesorhizobium japonicum (strain LMG 29417 / CECT 9101 / MAFF 303099) (Mesorhizobium loti (strain MAFF 303099)).